A 686-amino-acid chain; its full sequence is Methionine--tRNA ligase (686 aa).

A 'HIGH' region motif is present at residues 15–25 (PYTNGPIHIGH). Residues Cys-147, Cys-150, Cys-160, and Cys-163 each coordinate Zn(2+). The short motif at 336–340 (KLSTS) is the 'KMSKS' region element. Thr-339 is a binding site for ATP. In terms of domain architecture, tRNA-binding spans 584-686 (DFAKMDLRVG…AGVGNGEGIN (103 aa)).

This sequence belongs to the class-I aminoacyl-tRNA synthetase family. MetG type 1 subfamily. As to quaternary structure, homodimer. Requires Zn(2+) as cofactor.

The protein resides in the cytoplasm. It catalyses the reaction tRNA(Met) + L-methionine + ATP = L-methionyl-tRNA(Met) + AMP + diphosphate. In terms of biological role, is required not only for elongation of protein synthesis but also for the initiation of all mRNA translation through initiator tRNA(fMet) aminoacylation. The chain is Methionine--tRNA ligase from Flavobacterium psychrophilum (strain ATCC 49511 / DSM 21280 / CIP 103535 / JIP02/86).